A 428-amino-acid chain; its full sequence is Serine--tRNA ligase (428 aa).

235-237 (TAE) is a binding site for L-serine. 266–268 (RSE) is an ATP binding site. Glutamate 289 is a binding site for L-serine. 353 to 356 (EISS) is an ATP binding site. Serine 389 serves as a coordination point for L-serine.

Belongs to the class-II aminoacyl-tRNA synthetase family. Type-1 seryl-tRNA synthetase subfamily. As to quaternary structure, homodimer. The tRNA molecule binds across the dimer.

The protein resides in the cytoplasm. It carries out the reaction tRNA(Ser) + L-serine + ATP = L-seryl-tRNA(Ser) + AMP + diphosphate + H(+). The enzyme catalyses tRNA(Sec) + L-serine + ATP = L-seryl-tRNA(Sec) + AMP + diphosphate + H(+). It participates in aminoacyl-tRNA biosynthesis; selenocysteinyl-tRNA(Sec) biosynthesis; L-seryl-tRNA(Sec) from L-serine and tRNA(Sec): step 1/1. Functionally, catalyzes the attachment of serine to tRNA(Ser). Is also able to aminoacylate tRNA(Sec) with serine, to form the misacylated tRNA L-seryl-tRNA(Sec), which will be further converted into selenocysteinyl-tRNA(Sec). The sequence is that of Serine--tRNA ligase from Shewanella frigidimarina (strain NCIMB 400).